The following is a 530-amino-acid chain: Chaperone Ric-8A (530 aa).

Serine 435 bears the Phosphoserine mark. A phosphothreonine mark is found at threonine 440 and threonine 442. Phosphoserine is present on residues serine 501, serine 522, serine 523, and serine 527.

This sequence belongs to the synembryn family. In terms of assembly, interacts with GDP-bound G alpha proteins GNAI1, GNAO1 and GNAQ, and with GNA13 with lower affinity. Does not interact with G-alpha proteins when they are in complex with subunits beta and gamma. Interacts (via C-terminus) with RGS14; the interaction stimulates the dissociation of the complex between RGS14 and the active GTP-bound form of GNAI1. Interacts with NCS1; interaction is favored in the absence of Ca(2+) and myristoylation of NCS1 is not required. In terms of processing, phosphorylated at Ser-435 and Thr-440 by CK2, stabilizing its interface with G alpha proteins.

Its subcellular location is the cytoplasm. It localises to the cell cortex. Functionally, chaperone that specifically binds and folds nascent G alpha proteins prior to G protein heterotrimer formation, promoting their stability and activity: folds GNAI1, GNAO1, GNA13 and GNAQ. Does not fold G(s) G-alpha proteins GNAS nor GNAL. Also acts as a guanine nucleotide exchange factor (GEF) for G alpha proteins by stimulating exchange of bound GDP for free GTP. Involved in regulation of microtubule pulling forces during mitotic movement of chromosomes by stimulating G(i)-alpha protein (GNAI1), possibly leading to release G(i)-alpha-GTP and NuMA proteins from the NuMA-GPSM2-G(i)-alpha-GDP complex. Also acts as an activator for G(q)-alpha (GNAQ) protein by enhancing the G(q)-coupled receptor-mediated ERK activation. This chain is Chaperone Ric-8A (RIC8A), found in Macaca fascicularis (Crab-eating macaque).